The primary structure comprises 156 residues: Small ribosomal subunit protein uS7 (156 aa).

The protein belongs to the universal ribosomal protein uS7 family. As to quaternary structure, part of the 30S ribosomal subunit. Contacts proteins S9 and S11.

One of the primary rRNA binding proteins, it binds directly to 16S rRNA where it nucleates assembly of the head domain of the 30S subunit. Is located at the subunit interface close to the decoding center, probably blocks exit of the E-site tRNA. In Klebsiella pneumoniae subsp. pneumoniae (strain ATCC 700721 / MGH 78578), this protein is Small ribosomal subunit protein uS7.